Consider the following 285-residue polypeptide: Putative hydrolase DDAH2 (285 aa).

Residue H171 is the Proton donor of the active site. The active-site Nucleophile is C276.

This sequence belongs to the DDAH family. Post-translationally, phosphorylated by TBK1. Phosphorylation inhibits the translocation into the mitochondrion upon Sendai viral infection.

The protein resides in the cytoplasm. It localises to the mitochondrion. Putative hydrolase with unknown substrate. Does not hydrolyze N(G),N(G)-dimethyl-L-arginine (ADMA) which acts as an inhibitor of NOS. In endothelial cells, induces expression of vascular endothelial growth factor (VEGF) via phosphorylation of the transcription factor SP1 by PKA in a process that is independent of NO and NO synthase. Similarly, enhances pancreatic insulin secretion through SP1-mediated transcriptional up-regulation of secretagogin/SCGN, an insulin vesicle docking protein. Upon viral infection, relocates to mitochondria where it promotes mitochondrial fission through activation of DNM1L leading to the inhibition of innate response activation mediated by MAVS. In Bos taurus (Bovine), this protein is Putative hydrolase DDAH2 (DDAH2).